We begin with the raw amino-acid sequence, 319 residues long: Inositol-tetrakisphosphate 1-kinase 1 (319 aa).

Ser-2 is subject to N-acetylserine. 1D-myo-inositol 1,3,4-trisphosphate contacts are provided by Lys-18 and Lys-60. The ATP site is built by Arg-95 and Lys-145. One can recognise an ATP-grasp domain in the interval 99-318 (LEVITQLRFP…FWDMVTKKNH (220 aa)). Residues His-156 and Lys-188 each contribute to the 1D-myo-inositol 1,3,4-trisphosphate site. ATP-binding positions include 177–188 (QEFVNHGGVIFK) and Ser-203. Asp-273, Asp-288, and Asn-290 together coordinate Mg(2+). Asn-290 contributes to the 1D-myo-inositol 1,3,4-trisphosphate binding site.

The protein belongs to the ITPK1 family. As to quaternary structure, monomer. It depends on Mg(2+) as a cofactor. As to expression, expressed in siliques.

The catalysed reaction is 1D-myo-inositol 3,4,5,6-tetrakisphosphate + ATP = 1D-myo-inositol 1,3,4,5,6-pentakisphosphate + ADP + H(+). The enzyme catalyses 1D-myo-inositol 1,3,4-trisphosphate + ATP = 1D-myo-inositol 1,3,4,5-tetrakisphosphate + ADP + H(+). It catalyses the reaction 1D-myo-inositol 1,3,4-trisphosphate + ATP = 1D-myo-inositol 1,3,4,6-tetrakisphosphate + ADP + H(+). Kinase that can phosphorylate various inositol polyphosphate such as Ins(3,4,5,6)P4 or Ins(1,3,4)P3. Phosphorylates Ins(3,4,5,6)P4 at position 1 to form Ins(1,3,4,5,6)P5. This reaction is thought to have regulatory importance, since Ins(3,4,5,6)P4 is an inhibitor of plasma membrane Ca(2+)-activated Cl(-) channels, while Ins(1,3,4,5,6)P5 is not. Also phosphorylates Ins(1,3,4)P3 on O-5 and O-6 to form Ins(1,3,4,6)P4, an essential molecule in the hexakisphosphate (InsP6) pathway. The sequence is that of Inositol-tetrakisphosphate 1-kinase 1 (ITPK1) from Arabidopsis thaliana (Mouse-ear cress).